The sequence spans 708 residues: Pre-mRNA-splicing factor SPP382 (708 aa).

The 48-residue stretch at 61-108 (TYGIGAKLLSSMGYVAGKGLGKDGSGITTPIETQSRPMHNAGLGMFSN) folds into the G-patch domain.

In terms of assembly, component of the NTR complex (NTC-related complex), composed of NTR1, NTR2 and PRP43. Interacts with CLF1 and NTR2. Interacts with PRP43 and PRP45.

The protein resides in the cytoplasm. It is found in the nucleus. Its function is as follows. Involved in pre-mRNA splicing and spliceosome disassembly. Promotes release of excised lariat intron from the spliceosome by acting as a receptor for PRP43. This targeting of PRP43 leads to disassembly of the spliceosome with the separation of the U2, U5, U6 snRNPs and the NTC complex. This Saccharomyces cerevisiae (strain ATCC 204508 / S288c) (Baker's yeast) protein is Pre-mRNA-splicing factor SPP382 (SPP382).